The sequence spans 631 residues: Phosphomethylpyrimidine synthase (631 aa).

Residues asparagine 231, methionine 260, tyrosine 289, histidine 325, 345-347 (SRG), 386-389 (DGLR), and glutamate 425 each bind substrate. Histidine 429 is a Zn(2+) binding site. Tyrosine 452 provides a ligand contact to substrate. Histidine 493 contacts Zn(2+). 3 residues coordinate [4Fe-4S] cluster: cysteine 573, cysteine 576, and cysteine 581.

The protein belongs to the ThiC family. In terms of assembly, homodimer. The cofactor is [4Fe-4S] cluster.

It catalyses the reaction 5-amino-1-(5-phospho-beta-D-ribosyl)imidazole + S-adenosyl-L-methionine = 4-amino-2-methyl-5-(phosphooxymethyl)pyrimidine + CO + 5'-deoxyadenosine + formate + L-methionine + 3 H(+). It participates in cofactor biosynthesis; thiamine diphosphate biosynthesis. Catalyzes the synthesis of the hydroxymethylpyrimidine phosphate (HMP-P) moiety of thiamine from aminoimidazole ribotide (AIR) in a radical S-adenosyl-L-methionine (SAM)-dependent reaction. This chain is Phosphomethylpyrimidine synthase, found in Acinetobacter baylyi (strain ATCC 33305 / BD413 / ADP1).